A 1007-amino-acid polypeptide reads, in one-letter code: Serine/threonine-protein kinase PRP4 homolog (1007 aa).

Residues 1-10 (MAAAETQSLR) are compositionally biased toward polar residues. Positions 1–99 (MAAAETQSLR…EGMSPAKRTK (99 aa)) are disordered. Ala2 is modified (N-acetylalanine). A phosphoserine mark is found at Ser8, Ser20, Ser23, and Ser32. 2 stretches are compositionally biased toward basic residues: residues 39 to 59 (KHSR…KHKH) and 67 to 81 (KKHK…HKRK). Residues 82–91 (EVIDASDKEG) are compositionally biased toward basic and acidic residues. Ser87 and Ser93 each carry phosphoserine. The residue at position 99 (Lys99) is an N6-acetyllysine; alternate. Lys99 participates in a covalent cross-link: Glycyl lysine isopeptide (Lys-Gly) (interchain with G-Cter in SUMO2); alternate. Residue Lys111 forms a Glycyl lysine isopeptide (Lys-Gly) (interchain with G-Cter in SUMO2) linkage. A Glycyl lysine isopeptide (Lys-Gly) (interchain with G-Cter in SUMO2); alternate cross-link involves residue Lys117. Residue Lys117 forms a Glycyl lysine isopeptide (Lys-Gly) (interchain with G-Cter in SUMO1); alternate linkage. Ser131 carries the post-translational modification Phosphoserine. Tyr140 carries the phosphotyrosine modification. Disordered stretches follow at residues 140-533 (YESG…EEED) and 559-583 (SNMS…SPDD). Residues Ser142, Ser144, and Ser166 each carry the phosphoserine modification. The span at 157 to 168 (GNRSSTRSSSTK) shows a compositional bias: low complexity. Glycyl lysine isopeptide (Lys-Gly) (interchain with G-Cter in SUMO2) cross-links involve residues Lys170 and Lys177. 2 stretches are compositionally biased toward basic residues: residues 179 to 202 (TTKK…KKSK) and 214 to 230 (RSKS…SKRS). Phosphoserine occurs at positions 239, 241, 257, 277, 283, 292, and 294. Residues 247 to 270 (RSQEKIGKARSPTDDKVKIEDKSK) are compositionally biased toward basic and acidic residues. The span at 302 to 315 (SKDRRSRSKERKSK) shows a compositional bias: basic residues. The span at 316–325 (RSETDKEKKP) shows a compositional bias: basic and acidic residues. Residues Ser328, Ser354, Ser356, Ser366, and Ser368 each carry the phosphoserine modification. Residues 342–367 (PSRRPGRSPKRRSLSPKPRDKSRRSR) show a composition bias toward basic residues. Thr385 is modified (phosphothreonine). A Phosphoserine modification is found at Ser387. 2 stretches are compositionally biased toward basic and acidic residues: residues 395-408 (RSLE…ERRR) and 415-429 (RPRD…RSKD). Residues Ser427, Ser431, and Ser437 each carry the phosphoserine modification. Positions 438–497 (PTRRRSRSPIRRRSRSPLRRSRSPRRRSRSPRRRDRGRRSRSRLRRRSRSRGGRRRRSRS) are enriched in basic residues. A phosphoserine mark is found at Ser518, Ser519, Ser520, Ser565, Ser569, Ser578, and Ser580. Positions 518 to 533 (SSSDDNLEDFDVEEED) are enriched in acidic residues. Low complexity predominate over residues 562–581 (SVPSEPSSPQSSTRTRSPSP). Glycyl lysine isopeptide (Lys-Gly) (interchain with G-Cter in SUMO2) cross-links involve residues Lys593 and Lys659. The 317-residue stretch at 687–1003 (YNVYGYTGQG…INQALQHAFI (317 aa)) folds into the Protein kinase domain. Residues 693-701 (TGQGVFSNV) and Lys717 each bind ATP. At Lys717 the chain carries N6-acetyllysine. Asp815 acts as the Proton acceptor in catalysis. Residue Tyr849 is modified to Phosphotyrosine. Position 852 is a phosphoserine (Ser852).

This sequence belongs to the protein kinase superfamily. CMGC Ser/Thr protein kinase family. As to quaternary structure, interacts with CLK1 C-terminus. Associates with the U5 snRNP and NCOR1 deacetylase complexes. Identified in the spliceosome C complex. Post-translationally, phosphorylated by CLK1. Autophosphorylated; phosphorylation inhibits interaction with its targets, such as PRPF6 or SMARCA4.

It is found in the nucleus. Its subcellular location is the chromosome. It localises to the centromere. The protein localises to the kinetochore. The enzyme catalyses L-seryl-[protein] + ATP = O-phospho-L-seryl-[protein] + ADP + H(+). It catalyses the reaction L-threonyl-[protein] + ATP = O-phospho-L-threonyl-[protein] + ADP + H(+). Its function is as follows. Serine/threonine kinase involved in spliceosomal assembly as well as mitosis and signaling regulation. Connects chromatin mediated regulation of transcription and pre-mRNA splicing. During spliceosomal assembly, interacts with and phosphorylates PRPF6 and PRPF31, components of the U4/U6-U5 tri-small nuclear ribonucleoprotein (snRNP), to facilitate the formation of the spliceosome B complex. Plays a role in regulating transcription and the spindle assembly checkpoint (SAC). Associates with U5 snRNP and NCOR1 deacetylase complexes which may allow a coordination of pre-mRNA splicing with chromatin remodeling events involved in transcriptional regulation. Associates and probably phosphorylates SMARCA4 and NCOR1. Phosphorylates SRSF1. Associates with kinetochores during mitosis and is necessary for recruitment and maintenance of the checkpoint proteins such as MAD1L1 and MAD12L1 at the kinetochores. Phosphorylates and regulates the activity of the transcription factors such as ELK1 and KLF13. Phosphorylates nuclear YAP1 and WWTR1/TAZ which induces nuclear exclusion and regulates Hippo signaling pathway, involved in tissue growth control. This is Serine/threonine-protein kinase PRP4 homolog (PRP4K) from Pongo abelii (Sumatran orangutan).